The sequence spans 367 residues: uncharacterized protein (367 aa).

The protein belongs to the Gfo/Idh/MocA family.

This is an uncharacterized protein from Streptococcus pneumoniae serotype 4 (strain ATCC BAA-334 / TIGR4).